The sequence spans 327 residues: ATPase ASNA1 homolog (327 aa).

Lys-26–Thr-33 lines the ATP pocket. Asp-57 is an active-site residue. Glu-238 and Asn-265 together coordinate ATP. Zn(2+) is bound by residues Cys-274 and Cys-277.

This sequence belongs to the arsA ATPase family. In terms of assembly, homodimer.

Its subcellular location is the cytoplasm. The protein resides in the endoplasmic reticulum. Functionally, ATPase required for the post-translational delivery of tail-anchored (TA) proteins to the endoplasmic reticulum. Recognizes and selectively binds the transmembrane domain of TA proteins in the cytosol. This complex then targets to the endoplasmic reticulum by membrane-bound receptors, where the tail-anchored protein is released for insertion. This process is regulated by ATP binding and hydrolysis. ATP binding drives the homodimer towards the closed dimer state, facilitating recognition of newly synthesized TA membrane proteins. ATP hydrolysis is required for insertion. Subsequently, the homodimer reverts towards the open dimer state, lowering its affinity for the membrane-bound receptor, and returning it to the cytosol to initiate a new round of targeting. This Entamoeba dispar (strain ATCC PRA-260 / SAW760) protein is ATPase ASNA1 homolog.